Consider the following 347-residue polypeptide: NADH-ubiquinone oxidoreductase chain 2 (347 aa).

A run of 10 helical transmembrane segments spans residues 4 to 21 (LALI…VIVM), 26 to 44 (WLLV…IPVL), 59 to 79 (YFLT…TNLL), 93 to 115 (LAST…HFWV), 149 to 169 (LNLN…GWGG), 178 to 198 (ILAY…TYNP), 200 to 220 (LTLL…MLFM), 241 to 261 (ATSV…SGFL), 274 to 294 (ESIF…YFYM), and 323 to 343 (TPLL…APIL).

It belongs to the complex I subunit 2 family. As to quaternary structure, core subunit of respiratory chain NADH dehydrogenase (Complex I) which is composed of 45 different subunits. Interacts with TMEM242.

The protein resides in the mitochondrion inner membrane. The catalysed reaction is a ubiquinone + NADH + 5 H(+)(in) = a ubiquinol + NAD(+) + 4 H(+)(out). Its function is as follows. Core subunit of the mitochondrial membrane respiratory chain NADH dehydrogenase (Complex I) which catalyzes electron transfer from NADH through the respiratory chain, using ubiquinone as an electron acceptor. Essential for the catalytic activity and assembly of complex I. The polypeptide is NADH-ubiquinone oxidoreductase chain 2 (Cardioderma cor (Heart-nosed bat)).